A 171-amino-acid chain; its full sequence is Adenine phosphoribosyltransferase (171 aa).

Belongs to the purine/pyrimidine phosphoribosyltransferase family. In terms of assembly, homodimer.

It is found in the cytoplasm. It catalyses the reaction AMP + diphosphate = 5-phospho-alpha-D-ribose 1-diphosphate + adenine. Its pathway is purine metabolism; AMP biosynthesis via salvage pathway; AMP from adenine: step 1/1. Catalyzes a salvage reaction resulting in the formation of AMP, that is energically less costly than de novo synthesis. The polypeptide is Adenine phosphoribosyltransferase (apt) (Prochlorococcus marinus subsp. pastoris (strain CCMP1986 / NIES-2087 / MED4)).